A 731-amino-acid polypeptide reads, in one-letter code: Ribonuclease R (731 aa).

One can recognise an RNB domain in the interval 260–589; it reads RTDLRHFPFF…LHRVIKYLLF (330 aa). The region spanning 647 to 728 is the S1 motif domain; it reads GCILNGVISN…NEKKIELSLY (82 aa).

This sequence belongs to the RNR ribonuclease family. RNase R subfamily. In terms of assembly, monomer.

It is found in the cytoplasm. The enzyme catalyses Exonucleolytic cleavage in the 3'- to 5'-direction to yield nucleoside 5'-phosphates.. In terms of biological role, 3'-5' exoribonuclease that releases 5'-nucleoside monophosphates and is involved in maturation of structured RNAs. The sequence is that of Ribonuclease R from Buchnera aphidicola subsp. Acyrthosiphon pisum (strain APS) (Acyrthosiphon pisum symbiotic bacterium).